The primary structure comprises 202 residues: Probable nicotinate-nucleotide adenylyltransferase (202 aa).

The protein belongs to the NadD family.

It carries out the reaction nicotinate beta-D-ribonucleotide + ATP + H(+) = deamido-NAD(+) + diphosphate. Its pathway is cofactor biosynthesis; NAD(+) biosynthesis; deamido-NAD(+) from nicotinate D-ribonucleotide: step 1/1. Its function is as follows. Catalyzes the reversible adenylation of nicotinate mononucleotide (NaMN) to nicotinic acid adenine dinucleotide (NaAD). This is Probable nicotinate-nucleotide adenylyltransferase from Synechococcus sp. (strain JA-2-3B'a(2-13)) (Cyanobacteria bacterium Yellowstone B-Prime).